We begin with the raw amino-acid sequence, 318 residues long: NADH-ubiquinone oxidoreductase chain 1 (318 aa).

A run of 8 helical transmembrane segments spans residues 1–21, 71–91, 101–121, 145–165, 172–192, 224–244, 253–273, and 294–314; these read MLPITNSLTYIIPILIAVAFL, LLILSPILALTTAMLIWTPIP, LGLLSILAISSMAVNSTLWAG, VTLGIILLSILILTGGFTMQL, HIWLLTTSWPLTMMWFISTLA, FFLAEYTNIISMNLLTCIMFI, ELFLINLVTKTLLLSLTFLWI, and LPLTMALCLLQASLLVSISGI.

It belongs to the complex I subunit 1 family.

It is found in the mitochondrion inner membrane. It catalyses the reaction a ubiquinone + NADH + 5 H(+)(in) = a ubiquinol + NAD(+) + 4 H(+)(out). Its function is as follows. Core subunit of the mitochondrial membrane respiratory chain NADH dehydrogenase (Complex I) that is believed to belong to the minimal assembly required for catalysis. Complex I functions in the transfer of electrons from NADH to the respiratory chain. The immediate electron acceptor for the enzyme is believed to be ubiquinone. The protein is NADH-ubiquinone oxidoreductase chain 1 (MT-ND1) of Varanus rudicollis (Rough-necked monitor lizard).